A 109-amino-acid chain; its full sequence is Nucleoid-associated protein MS1507 (109 aa).

The interval 1 to 21 (MFGKGGLGNLMKQAQQMQERM) is disordered.

It belongs to the YbaB/EbfC family. Homodimer.

The protein localises to the cytoplasm. It is found in the nucleoid. Its function is as follows. Binds to DNA and alters its conformation. May be involved in regulation of gene expression, nucleoid organization and DNA protection. This is Nucleoid-associated protein MS1507 from Mannheimia succiniciproducens (strain KCTC 0769BP / MBEL55E).